A 165-amino-acid polypeptide reads, in one-letter code: Nucleotide-binding protein Cagg_1607 (165 aa).

This sequence belongs to the YajQ family.

In terms of biological role, nucleotide-binding protein. In Chloroflexus aggregans (strain MD-66 / DSM 9485), this protein is Nucleotide-binding protein Cagg_1607.